Here is a 457-residue protein sequence, read N- to C-terminus: Glutamate--tRNA ligase 2 (457 aa).

The 'HIGH' region signature appears at 9 to 19; that stretch reads PSPTGYIHIGN. A 'KMSKS' region motif is present at residues 250–254; that stretch reads GLSKR. K253 provides a ligand contact to ATP.

Belongs to the class-I aminoacyl-tRNA synthetase family. Glutamate--tRNA ligase type 1 subfamily. In terms of assembly, monomer.

The protein localises to the cytoplasm. It catalyses the reaction tRNA(Glu) + L-glutamate + ATP = L-glutamyl-tRNA(Glu) + AMP + diphosphate. In terms of biological role, catalyzes the attachment of glutamate to tRNA(Glu) in a two-step reaction: glutamate is first activated by ATP to form Glu-AMP and then transferred to the acceptor end of tRNA(Glu). This chain is Glutamate--tRNA ligase 2, found in Brucella melitensis biotype 1 (strain ATCC 23456 / CCUG 17765 / NCTC 10094 / 16M).